A 478-amino-acid polypeptide reads, in one-letter code: Aspartate ammonia-lyase (478 aa).

Threonine 104, serine 143, threonine 144, asparagine 145, and threonine 190 together coordinate L-aspartate. Positions 320 to 329 are SS loop; sequence GSSIMPAKVN. Serine 321 functions as the Proton acceptor in the catalytic mechanism. 2 residues coordinate L-aspartate: serine 322 and lysine 327.

Belongs to the class-II fumarase/aspartase family. Aspartase subfamily. In terms of assembly, homotetramer.

The enzyme catalyses L-aspartate = fumarate + NH4(+). In terms of biological role, catalyzes the reversible conversion of L-aspartate to fumarate and ammonia. This chain is Aspartate ammonia-lyase (aspA), found in Escherichia coli O157:H7.